A 58-amino-acid polypeptide reads, in one-letter code: U8-ctenitoxin-Pr1a (58 aa).

5 disulfide bridges follow: C2–C16, C9–C22, C15–C40, C24–C38, and C48–C55.

Expressed by the venom gland.

It is found in the secreted. Its function is as follows. No toxic effects on mice at dose levels of 5 ug per mouse. May be toxic to insects. The protein is U8-ctenitoxin-Pr1a of Phoneutria reidyi (Brazilian Amazonian armed spider).